A 118-amino-acid polypeptide reads, in one-letter code: Vitelline membrane protein Vm32E (118 aa).

The first 17 residues, 1–17 (MKIVALTLVAFVALAGA), serve as a signal peptide directing secretion. The 40-residue stretch at 36-75 (GYPAPPCPTNYLFSCQPNLAPAPCAQEAQAPAYGSAGAYT) folds into the VM domain.

It belongs to the vitelline membrane family.

It localises to the secreted. Major early eggshell protein. This is Vitelline membrane protein Vm32E from Drosophila sechellia (Fruit fly).